We begin with the raw amino-acid sequence, 281 residues long: Probable protein phosphatase 2C 9 (281 aa).

The 248-residue stretch at 33–280 folds into the PPM-type phosphatase domain; it reads KYGFSLVKGK…DDISCVVVRF (248 aa). Positions 70, 71, 232, and 271 each coordinate Mn(2+).

This sequence belongs to the PP2C family. In terms of assembly, interacts with phytochromes (via N-terminus). It depends on Mg(2+) as a cofactor. Requires Mn(2+) as cofactor.

It localises to the nucleus. The catalysed reaction is O-phospho-L-seryl-[protein] + H2O = L-seryl-[protein] + phosphate. It catalyses the reaction O-phospho-L-threonyl-[protein] + H2O = L-threonyl-[protein] + phosphate. Functionally, involved in the regulation of phytochrome signaling. May regulate phytochrome-interacting factor 3 (PIF3) through the dephosphorylation of phytochrome. The chain is Probable protein phosphatase 2C 9 from Arabidopsis thaliana (Mouse-ear cress).